The chain runs to 441 residues: Ribosomal protein uS12 methylthiotransferase RimO (441 aa).

Residues 8–118 (PKIGFVSLGC…VLEHVHHYVP (111 aa)) enclose the MTTase N-terminal domain. Positions 17, 53, 82, 150, 154, and 157 each coordinate [4Fe-4S] cluster. Residues 136 to 373 (LTPRHYAYLK…MQLQQQISAE (238 aa)) enclose the Radical SAM core domain. A TRAM domain is found at 376–441 (QEKVGREILV…DEYDLWGSRV (66 aa)).

The protein belongs to the methylthiotransferase family. RimO subfamily. [4Fe-4S] cluster serves as cofactor.

The protein resides in the cytoplasm. It carries out the reaction L-aspartate(89)-[ribosomal protein uS12]-hydrogen + (sulfur carrier)-SH + AH2 + 2 S-adenosyl-L-methionine = 3-methylsulfanyl-L-aspartate(89)-[ribosomal protein uS12]-hydrogen + (sulfur carrier)-H + 5'-deoxyadenosine + L-methionine + A + S-adenosyl-L-homocysteine + 2 H(+). Catalyzes the methylthiolation of an aspartic acid residue of ribosomal protein uS12. The polypeptide is Ribosomal protein uS12 methylthiotransferase RimO (Shigella sonnei (strain Ss046)).